A 644-amino-acid polypeptide reads, in one-letter code: Chaperone protein DnaK (644 aa).

Position 199 is a phosphothreonine; by autocatalysis (Thr199). The interval 603–644 (YAKKSSEGQAAQGQTQSQESTKPAEEGVVDAEFEEVKEEDKK) is disordered. Residues 609–623 (EGQAAQGQTQSQEST) show a composition bias toward polar residues. Positions 629–644 (GVVDAEFEEVKEEDKK) are enriched in acidic residues.

The protein belongs to the heat shock protein 70 family.

In terms of biological role, acts as a chaperone. The polypeptide is Chaperone protein DnaK (Legionella pneumophila (strain Corby)).